We begin with the raw amino-acid sequence, 227 residues long: PKHD-type hydroxylase BPSS1206 (227 aa).

In terms of domain architecture, Fe2OG dioxygenase spans 78 to 178 (KVFPPLFNRY…RVASFFWIQS (101 aa)). 3 residues coordinate Fe cation: His96, Asp98, and His159. Arg169 lines the 2-oxoglutarate pocket.

The cofactor is Fe(2+). L-ascorbate serves as cofactor.

This is PKHD-type hydroxylase BPSS1206 from Burkholderia pseudomallei (strain K96243).